The chain runs to 1161 residues: Nuclear receptor-interacting protein 1 (1161 aa).

The interaction with ZNF366 stretch occupies residues 1 to 416 (MTHGEELGSD…FESSTPTTID (416 aa)). The LXXLL motif 1 motif lies at 21–25 (LEGLL). The disordered stretch occupies residues 34 to 68 (GTAINKKSAGHKEEDQNFNLSGSAFPSCQSNGPTV). Over residues 50–68 (NFNLSGSAFPSCQSNGPTV) the composition is skewed to polar residues. The segment at 78–335 (MLHLKKARLL…LNGQARALPA (258 aa)) is repression domain 1. Ser-104 bears the Phosphoserine mark. Position 111 is an N6-acetyllysine; alternate (Lys-111). Lys-111 is covalently cross-linked (Glycyl lysine isopeptide (Lys-Gly) (interchain with G-Cter in SUMO2); alternate). The LXXLL motif 2 motif lies at 133 to 137 (LASLL). At Lys-158 the chain carries N6-acetyllysine. A Glycyl lysine isopeptide (Lys-Gly) (interchain with G-Cter in SUMO2) cross-link involves residue Lys-170. An LXXLL motif 3 motif is present at residues 185–189 (LKTLL). Residues Lys-195 and Lys-198 each participate in a glycyl lysine isopeptide (Lys-Gly) (interchain with G-Cter in SUMO2) cross-link. Phosphothreonine is present on Thr-207. Phosphoserine is present on Ser-218. Residues 267 to 271 (LALLL) carry the LXXLL motif 4 motif. 2 positions are modified to N6-acetyllysine: Lys-287 and Lys-311. Ser-358 bears the Phosphoserine mark. A Glycyl lysine isopeptide (Lys-Gly) (interchain with G-Cter in SUMO2) cross-link involves residue Lys-374. Ser-380 is subject to Phosphoserine. The short motif at 382-386 (LLHLL) is the LXXLL motif 5 element. Residues 393–436 (TPMNGHSQNERASSFESSTPTTIDEYSDNNPSFTDDSSGDESSY) are disordered. The repression domain 2 stretch occupies residues 411-701 (TPTTIDEYSD…PAGPEPGLPG (291 aa)). The tract at residues 432 to 473 (DESSYSNCVPIDLSCKHRIEKPEAERPVSLENLTQSLLNTWD) is required for targeting to small nuclear foci. A CTBP-binding; principal site motif is present at residues 441–447 (PIDLSCK). Lys-447 and Lys-482 each carry N6-acetyllysine. A Phosphoserine modification is found at Ser-488. The LXXLL motif 6 motif lies at 501-505 (LLQLL). Lys-509 is covalently cross-linked (Glycyl lysine isopeptide (Lys-Gly) (interchain with G-Cter in SUMO2)). Over residues 517–552 (NASPQDIHSDGTKFSPQNYTRTSVIESPSTNRTTPV) the composition is skewed to polar residues. The tract at residues 517 to 559 (NASPQDIHSDGTKFSPQNYTRTSVIESPSTNRTTPVSTPPLYT) is disordered. Ser-519 bears the Phosphoserine mark. An N6-acetyllysine modification is found at Lys-529. Ser-531, Ser-543, and Ser-565 each carry phosphoserine. Residues 566–570 (PINLS) carry the CTBP-binding motif. Disordered regions lie at residues 604–623 (TKGK…AQNS), 639–702 (GLQS…LPGC), and 717–747 (LLGN…ERAA). Lys-607 bears the N6-acetyllysine mark. Ser-672 carries the phosphoserine modification. Residues 714–718 (LQLLL) carry the LXXLL motif 7 motif. A compositionally biased stretch (basic and acidic residues) spans 724–747 (GKNEKKEKTPARDEAPQEHSERAA). Residues 736–886 (DEAPQEHSER…TAVDTANHHS (151 aa)) form a repression domain 3 region. Positions 754-1161 (VKIKSEPCDD…NALTIKKESE (408 aa)) are interaction with ZNF366. Glycyl lysine isopeptide (Lys-Gly) (interchain with G-Cter in SUMO2) cross-links involve residues Lys-757 and Lys-803. The residue at position 808 (Ser-808) is a Phosphoserine. The short motif at 820 to 824 (LSRLL) is the LXXLL motif 8 element. Residues 829 to 848 (ESYPADEQDKSHRNSELPTL) form a disordered region. Residues Lys-851 and Lys-902 each participate in a glycyl lysine isopeptide (Lys-Gly) (interchain with G-Cter in SUMO2) cross-link. Lys-932 is subject to N6-acetyllysine; alternate. A Glycyl lysine isopeptide (Lys-Gly) (interchain with G-Cter in SUMO2); alternate cross-link involves residue Lys-932. Residues 937 to 941 (LKQLL) carry the LXXLL motif 9 motif. The short motif at 947–951 (VRDLS) is the CTBP-binding element. Residues 950 to 962 (LSPHRSDSVPDTK) show a composition bias toward basic and acidic residues. A disordered region spans residues 950–976 (LSPHRSDSVPDTKKKGHKNNAPGSKPE). A Phosphoserine modification is found at Ser-1003. The ligand-dependent nuclear receptor binding stretch occupies residues 1063–1076 (LTKTNPILYYMLQK). Residues Lys-1108, Lys-1118, and Lys-1157 each participate in a glycyl lysine isopeptide (Lys-Gly) (interchain with G-Cter in SUMO2) cross-link. The interval 1121–1161 (FFNLRSPYNSHMGNNASRPHSTNGEVYGLLGNALTIKKESE) is repression domain 4.

Interacts with CTBP1, CTBP2, ERS1, HDAC1, HDAC2, HDAC5, HDAC6, NR2C2, NR3C1, NR3C2, YWHAH, JUN and FOS. Found in a complex with both NR3C1 and YWHAH. Interacts with NR2C1 (sumoylated form and via the ligand-binding domain); the interaction results in promoting the repressor activity of NR2C1. Interacts with RARA and RXRB homodimers and RARA/RXRB heterodimers in the presence of ligand. Interacts with HDAC1 and HDAC3 via its N-terminal domain. Interacts with ZNF366. Interacts with RORA. In terms of processing, acetylation abolishes interaction with CTBP1. Phosphorylation enhances interaction with YWHAH. Acetylation regulates its nuclear translocation and corepressive activity. As to expression, expressed in the embryonic placenta. In the adult, expression is strong in the testis and brain. Also expressed at a high level in the white adipose tissue. Expressed constantly but at a weaker level in the adult heart, lung, stomach and kidney. Expressed moderately in the skeletal muscle. Expressed at a low level in the adult spleen, liver and brown adipose tissue. Expressed in the ovary at a high level in granulosa cells and at a lower level in the thecal and interstitial compartments.

Its subcellular location is the nucleus. Its function is as follows. Modulates transcriptional repression by nuclear hormone receptors such as NR2C1, thyroid hormone receptor and retinoic acid receptor/RARA. Essential for cumulus expansion and follicle rupture during ovulation. Also controls the balance between fat accumulation and energy expenditure. Positive regulator of the circadian clock gene expression: stimulates transcription of BMAL1, CLOCK and CRY1 by acting as a coactivator for RORA and RORC. Involved in the regulation of ovarian function. Plays a role in renal development. The sequence is that of Nuclear receptor-interacting protein 1 from Mus musculus (Mouse).